We begin with the raw amino-acid sequence, 108 residues long: Thiosulfate sulfurtransferase GlpE (108 aa).

The Rhodanese domain maps to 18-106 (ENEGATLADI…WERSGLPIET (89 aa)). The active-site Cysteine persulfide intermediate is Cys-66.

The protein belongs to the GlpE family.

The protein localises to the cytoplasm. It carries out the reaction thiosulfate + hydrogen cyanide = thiocyanate + sulfite + 2 H(+). It catalyses the reaction thiosulfate + [thioredoxin]-dithiol = [thioredoxin]-disulfide + hydrogen sulfide + sulfite + 2 H(+). Its function is as follows. Transferase that catalyzes the transfer of sulfur from thiosulfate to thiophilic acceptors such as cyanide or dithiols. May function in a CysM-independent thiosulfate assimilation pathway by catalyzing the conversion of thiosulfate to sulfite, which can then be used for L-cysteine biosynthesis. This is Thiosulfate sulfurtransferase GlpE from Actinobacillus pleuropneumoniae serotype 3 (strain JL03).